Here is a 146-residue protein sequence, read N- to C-terminus: Large-conductance mechanosensitive channel (146 aa).

Transmembrane regions (helical) follow at residues I17–V37, I40–V60, and L89–I109.

The protein belongs to the MscL family. As to quaternary structure, homopentamer.

It is found in the cell inner membrane. In terms of biological role, channel that opens in response to stretch forces in the membrane lipid bilayer. May participate in the regulation of osmotic pressure changes within the cell. This chain is Large-conductance mechanosensitive channel, found in Acinetobacter baylyi (strain ATCC 33305 / BD413 / ADP1).